Here is a 276-residue protein sequence, read N- to C-terminus: Energy-coupling factor transporter ATP-binding protein EcfA1 (276 aa).

The ABC transporter domain occupies 2–237 (IEIKNLKFKY…GSELVDLGLD (236 aa)). 37–44 (GHNGSGKS) provides a ligand contact to ATP.

This sequence belongs to the ABC transporter superfamily. Energy-coupling factor EcfA family. As to quaternary structure, forms a stable energy-coupling factor (ECF) transporter complex composed of 2 membrane-embedded substrate-binding proteins (S component), 2 ATP-binding proteins (A component) and 2 transmembrane proteins (T component).

Its subcellular location is the cell membrane. In terms of biological role, ATP-binding (A) component of a common energy-coupling factor (ECF) ABC-transporter complex. Unlike classic ABC transporters this ECF transporter provides the energy necessary to transport a number of different substrates. In Streptococcus thermophilus (strain CNRZ 1066), this protein is Energy-coupling factor transporter ATP-binding protein EcfA1.